The primary structure comprises 368 residues: Homoserine O-acetyltransferase (368 aa).

The region spanning 43-346 (ILLEHALTGT…EYGHDAFLVE (304 aa)) is the AB hydrolase-1 domain. Ser-145 acts as the Nucleophile in catalysis. Arg-212 contacts substrate. Residues Asp-307 and His-340 contribute to the active site. Asp-341 lines the substrate pocket.

Belongs to the AB hydrolase superfamily. MetX family. In terms of assembly, homodimer.

Its subcellular location is the cytoplasm. The catalysed reaction is L-homoserine + acetyl-CoA = O-acetyl-L-homoserine + CoA. It functions in the pathway amino-acid biosynthesis; L-methionine biosynthesis via de novo pathway; O-acetyl-L-homoserine from L-homoserine: step 1/1. Its function is as follows. Transfers an acetyl group from acetyl-CoA to L-homoserine, forming acetyl-L-homoserine. The sequence is that of Homoserine O-acetyltransferase from Listeria monocytogenes serovar 1/2a (strain ATCC BAA-679 / EGD-e).